We begin with the raw amino-acid sequence, 186 residues long: Large ribosomal subunit protein uL22 (186 aa).

The interval 160–186 is disordered; sequence AAENEPAKKKLSKKKLQRQKEKMMRNE. A compositionally biased stretch (basic and acidic residues) spans 177-186; sequence RQKEKMMRNE.

The protein belongs to the universal ribosomal protein uL22 family.

This Aedes aegypti (Yellowfever mosquito) protein is Large ribosomal subunit protein uL22 (RpL17).